Here is a 200-residue protein sequence, read N- to C-terminus: Large ribosomal subunit protein uL29 (200 aa).

The interval M1–K107 is large ribosomal subunit protein uL29. Residues S92–Q200 are disordered. The segment covering T93–K179 has biased composition (basic and acidic residues). Residues P108–Q200 form a unknown region. Residues K186 to Q200 are compositionally biased toward basic residues.

This sequence belongs to the universal ribosomal protein uL29 family.

This Mycoplasma genitalium (strain ATCC 33530 / DSM 19775 / NCTC 10195 / G37) (Mycoplasmoides genitalium) protein is Large ribosomal subunit protein uL29.